The following is a 414-amino-acid chain: D-mannose isomerase (414 aa).

Residues histidine 255 and histidine 390 each act as proton donor/acceptor in the active site.

Belongs to the N-acylglucosamine 2-epimerase family. In terms of assembly, monomer.

It carries out the reaction D-mannose = D-fructose. Its activity is regulated as follows. Strongly inhibited by Ag(2+), Cu(2+) and cetyltrimethyl ammonium bromide (CTAB). Its function is as follows. Catalyzes the reversible isomerization of D-mannose to D-fructose. Shows high specific activity towards mannose and fructose, and has no detectable activity towards other monosaccharides and disaccharides. The chain is D-mannose isomerase from Pseudomonas cannabina pv. alisalensis.